We begin with the raw amino-acid sequence, 200 residues long: Putative peroxiredoxin sll0755 (200 aa).

Positions 5 to 163 constitute a Thioredoxin domain; it reads LRVGQPAPDF…TLRVLKAIRH (159 aa). Cys-50 functions as the Cysteine sulfenic acid (-SOH) intermediate in the catalytic mechanism.

Belongs to the peroxiredoxin family. AhpC/Prx1 subfamily. In terms of assembly, homodimer; disulfide-linked, upon oxidation.

It localises to the cytoplasm. The catalysed reaction is a hydroperoxide + [thioredoxin]-dithiol = an alcohol + [thioredoxin]-disulfide + H2O. Functionally, thiol-specific peroxidase that catalyzes the reduction of hydrogen peroxide and organic hydroperoxides to water and alcohols, respectively. Plays a role in cell protection against oxidative stress by detoxifying peroxides. This Synechocystis sp. (strain ATCC 27184 / PCC 6803 / Kazusa) protein is Putative peroxiredoxin sll0755.